A 1680-amino-acid polypeptide reads, in one-letter code: SWI/SNF chromatin-remodeling complex subunit snf22 (1680 aa).

Disordered stretches follow at residues 61 to 135, 203 to 258, 274 to 300, and 367 to 427; these read QQMR…SQAS, NNSF…HSFS, RRGSIPVNPSTFSASSPPSGSMLASPY, and YVYR…VPPT. The segment covering 62 to 91 has biased composition (polar residues); sequence QMRNQSSEFPDAENTNLRKQQDTLPTTGFN. 2 stretches are compositionally biased toward low complexity: residues 118–127 and 222–233; these read GNGNVGLNNP and SSLPHSFASPSS. Polar residues predominate over residues 234 to 245; it reads TFEQPHTVQSRA. Composition is skewed to low complexity over residues 247-258, 282-299, and 374-392; these read SVDTTSSSHSFS, PSTFSASSPPSGSMLASP, and PPSATSFQPSSSRSPSVDP. Residues 406–419 are compositionally biased toward polar residues; it reads PSPSASALKTQSHV. Residues 429–465 enclose the QLQ domain; that stretch reads KLNHAQLAMLKSQIVAYNCLNSPNGQVPPAVQQAIFG. Polar residues predominate over residues 477-489; it reads SMPFQQNVPQMSS. A disordered region spans residues 477–499; the sequence is SMPFQQNVPQMSSVKKDTPTRDA. Positions 490-499 are enriched in basic and acidic residues; that stretch reads VKKDTPTRDA. Positions 704–776 constitute an HSA domain; sequence QKTEHAMRQK…ARQRLQALRA (73 aa). Positions 817-832 are enriched in polar residues; sequence SNIHSGNTSGKGSNSA. The disordered stretch occupies residues 817-836; that stretch reads SNIHSGNTSGKGSNSAELEA. In terms of domain architecture, Helicase ATP-binding spans 881–1046; that stretch reads LSLYNNNLNG…WALLNFVLPK (166 aa). 894 to 901 serves as a coordination point for ATP; it reads DEMGLGKT. Positions 996–999 match the DEGH box motif; that stretch reads DEGH. The 164-residue stretch at 1191 to 1354 folds into the Helicase C-terminal domain; that stretch reads LLDRILPKLF…STPEEREAFL (164 aa). The tract at residues 1466 to 1511 is disordered; sequence TVDDPSSTLMPRKRGRPRKKTNSGSSLSTPLSQESSLARSGRKNTP. The span at 1476–1486 shows a compositional bias: basic residues; it reads PRKRGRPRKKT. Positions 1488–1502 are enriched in low complexity; that stretch reads SGSSLSTPLSQESSL. The 111-residue stretch at 1513 to 1623 folds into the Bromo domain; the sequence is YKQKALRRYC…KTLKEVIEDL (111 aa).

This sequence belongs to the SNF2/RAD54 helicase family. Component of the SWI/SNF global transcription activator complex composed of at least arp9, arp42, snf5, snf22, snf30, sbf59, sol1, ssr1, ssr2, ssr3, ssr4 and tfg3.

Its subcellular location is the nucleus. Helicase. Component of the SWI/SNF complex, an ATP-dependent chromatin remodeling complex, required for the positive and negative regulation of gene expression of a large number of genes. It changes chromatin structure by altering DNA-histone contacts within a nucleosome, leading eventually to a change in nucleosome position, thus facilitating or repressing binding of gene-specific transcription factors. The sequence is that of SWI/SNF chromatin-remodeling complex subunit snf22 (snf22) from Schizosaccharomyces pombe (strain 972 / ATCC 24843) (Fission yeast).